The following is a 289-amino-acid chain: Iodotyrosine deiodinase 1 (289 aa).

The chain crosses the membrane as a helical span at residues 1–21 (MYFLTPILVAILCILVVWIFK). Residues 29 to 58 (KKKGEPRTRAEARPWVDEDLKDSSDLHQAE) are compositionally biased toward basic and acidic residues. Positions 29 to 69 (KKKGEPRTRAEARPWVDEDLKDSSDLHQAEEDADEWQESEE) are disordered. Acidic residues predominate over residues 59–69 (EDADEWQESEE). FMN contacts are provided by residues 100–104 (RRSVR), Ser-128, and 128–129 (SG). 4 residues coordinate 3-iodo-L-tyrosine: Ala-130, Glu-157, Tyr-161, and Lys-182. Residues 237–239 (TTT) and Arg-279 each bind FMN.

Belongs to the nitroreductase family. Homodimer. FMN is required as a cofactor. In terms of tissue distribution, expressed at a high level in thyroid gland (at protein level). Expressed at a high level in thyroid gland and at lower level in kidney and trachea.

It localises to the cell membrane. It is found in the cytoplasmic vesicle membrane. It carries out the reaction 2 iodide + L-tyrosine + 2 NADP(+) = 3,5-diiodo-L-tyrosine + 2 NADPH + H(+). It catalyses the reaction iodide + L-tyrosine + NADP(+) = 3-iodo-L-tyrosine + NADPH. The catalysed reaction is 3-iodo-L-tyrosine + iodide + NADP(+) = 3,5-diiodo-L-tyrosine + NADPH + H(+). The enzyme catalyses L-tyrosine + chloride + NADP(+) = 3-chloro-L-tyrosine + NADPH. It carries out the reaction bromide + L-tyrosine + NADP(+) = 3-bromo-L-tyrosine + NADPH. Functionally, catalyzes the dehalogenation of halotyrosines such as 3-bromo-L-tyrosine, 3-chloro-L-tyrosine, 3-iodo-L-tyrosine and 3,5-diiodo-L-tyrosine. During thyroid hormone biosynthesis, facilitates iodide salvage by catalysing the oxidative NADPH-dependent deiodination of the halogenated by-products of thyroid hormone production, monoiodotyrosine (L-MIT) and diiodotyrosine (L-DIT). The scavanged iodide can then reenter the hormone-producing pathways. Acts more efficiently on 3-iodo-L-tyrosine than 3,5-diiodo-L-tyrosine. The protein is Iodotyrosine deiodinase 1 of Homo sapiens (Human).